The chain runs to 242 residues: E3 ubiquitin-protein ligase ZNRF2 (242 aa).

The tract at residues 1–141 is disordered; sequence MGAKQSGPAA…VGGSPGGPRL (141 aa). Gly2 carries the N-myristoyl glycine lipid modification. Ser19, Ser21, and Ser25 each carry phosphoserine. Low complexity predominate over residues 19–29; the sequence is SGSDLPSSSSG. Positions 30-41 are enriched in gly residues; the sequence is GANGTAGGGGGA. Low complexity predominate over residues 59–97; sequence PSASGGAAAAAAAPAAPAAPRSRSLGGAVGSVASGARAA. Phosphoserine occurs at positions 82, 89, 113, 116, and 135. Residues 99–118 are compositionally biased toward polar residues; sequence SPFSIPNSSSGPYGSQDSVH. Ser145 carries the phosphoserine; by MTOR modification. Ser151 and Ser193 each carry phosphoserine. An RING-type; atypical zinc finger spans residues 199 to 240; it reads CAICLEELQQGDTIARLPCLCIYHKGCIDEWFEVNRSCPEHP.

In terms of assembly, interacts with UBE2N. Interacts with ZNRF1. Interacts (when phosphorylated) with YWHAE. Phosphorylated; leading to binding to YWHAE. Phosphorylated by MTOR at Ser-145 and dephosphorylated by PP6C. Ser-145 phosphorylation stimulates vesicle-to-cytosol translocation. Highly expressed in the brain, with higher expression during development than in adult. Expressed also in mammary glands, testis, colon and kidney.

The protein localises to the endosome membrane. It localises to the lysosome membrane. It is found in the presynaptic cell membrane. The protein resides in the cytoplasm. It catalyses the reaction S-ubiquitinyl-[E2 ubiquitin-conjugating enzyme]-L-cysteine + [acceptor protein]-L-lysine = [E2 ubiquitin-conjugating enzyme]-L-cysteine + N(6)-ubiquitinyl-[acceptor protein]-L-lysine.. The protein operates within protein modification; protein ubiquitination. Its function is as follows. E3 ubiquitin-protein ligase that plays a role in the establishment and maintenance of neuronal transmission and plasticity. Ubiquitinates the Na(+)/K(+) ATPase alpha-1 subunit/ATP1A1 and thereby influences its endocytosis and/or degradation. Acts also as a positive regulator of mTORC1 activation by amino acids, which functions upstream of the V-ATPase and of Rag-GTPases. In turn, phosphorylation by mTOR leads to its inhibition via targeting to the cytosol allowing a self-regulating feedback mechanism. In Homo sapiens (Human), this protein is E3 ubiquitin-protein ligase ZNRF2 (ZNRF2).